The following is a 240-amino-acid chain: MSLEPVYKRVLLKASGEALMGAQGFGIDVTVADRIASDIAEARHMGVEVGVVVGGGNIFRGVAVASKGGDRVTGDHMGMLGTIINALALATSLRKLNIDTVVLSAISMPEICESFSQRATLYHLSMGRVVIFAGGTGNPFFTTDSAAALRAAEMGAQAIFKGTQVDGIYTADPKKYPDATRFDRLTHQEVLDRGLAVMDVAAVALARENSIPIIVFSIHEKGGFAEILTGGGLKTIVSDN.

13–16 (KASG) is an ATP binding site. The tract at residues 21 to 26 (GAQGFG) is involved in allosteric activation by GTP. UMP is bound at residue glycine 55. The ATP site is built by glycine 56 and arginine 60. UMP contacts are provided by residues aspartate 75 and 136 to 143 (TGNPFFTT). Positions 163, 164, 169, and 172 each coordinate ATP.

This sequence belongs to the UMP kinase family. As to quaternary structure, homohexamer.

Its subcellular location is the cytoplasm. The enzyme catalyses UMP + ATP = UDP + ADP. The protein operates within pyrimidine metabolism; CTP biosynthesis via de novo pathway; UDP from UMP (UMPK route): step 1/1. Its activity is regulated as follows. Allosterically activated by GTP. Inhibited by UTP. Its function is as follows. Catalyzes the reversible phosphorylation of UMP to UDP. This is Uridylate kinase from Rhizobium etli (strain ATCC 51251 / DSM 11541 / JCM 21823 / NBRC 15573 / CFN 42).